We begin with the raw amino-acid sequence, 274 residues long: Putative hydro-lyase SAV_6940 (274 aa).

The protein belongs to the D-glutamate cyclase family.

The sequence is that of Putative hydro-lyase SAV_6940 from Streptomyces avermitilis (strain ATCC 31267 / DSM 46492 / JCM 5070 / NBRC 14893 / NCIMB 12804 / NRRL 8165 / MA-4680).